Consider the following 420-residue polypeptide: uncharacterized protein (420 aa).

One can recognise a YcaO domain in the interval 79–420 (GKGIDNEAAM…AVNTIRGAES (342 aa)).

This is an uncharacterized protein from Rhizobium leguminosarum bv. trifolii.